The primary structure comprises 145 residues: D-aminoacyl-tRNA deacylase (145 aa).

Positions 137–138 (GP) match the Gly-cisPro motif, important for rejection of L-amino acids motif.

Belongs to the DTD family. In terms of assembly, homodimer.

Its subcellular location is the cytoplasm. The catalysed reaction is glycyl-tRNA(Ala) + H2O = tRNA(Ala) + glycine + H(+). It catalyses the reaction a D-aminoacyl-tRNA + H2O = a tRNA + a D-alpha-amino acid + H(+). An aminoacyl-tRNA editing enzyme that deacylates mischarged D-aminoacyl-tRNAs. Also deacylates mischarged glycyl-tRNA(Ala), protecting cells against glycine mischarging by AlaRS. Acts via tRNA-based rather than protein-based catalysis; rejects L-amino acids rather than detecting D-amino acids in the active site. By recycling D-aminoacyl-tRNA to D-amino acids and free tRNA molecules, this enzyme counteracts the toxicity associated with the formation of D-aminoacyl-tRNA entities in vivo and helps enforce protein L-homochirality. This Shewanella sp. (strain MR-4) protein is D-aminoacyl-tRNA deacylase.